The primary structure comprises 226 residues: Putative N-acetylmannosamine-6-phosphate 2-epimerase 1 (226 aa).

Belongs to the NanE family.

The enzyme catalyses an N-acyl-D-glucosamine 6-phosphate = an N-acyl-D-mannosamine 6-phosphate. It participates in amino-sugar metabolism; N-acetylneuraminate degradation; D-fructose 6-phosphate from N-acetylneuraminate: step 3/5. In terms of biological role, converts N-acetylmannosamine-6-phosphate (ManNAc-6-P) to N-acetylglucosamine-6-phosphate (GlcNAc-6-P). This Salmonella paratyphi A (strain ATCC 9150 / SARB42) protein is Putative N-acetylmannosamine-6-phosphate 2-epimerase 1.